The primary structure comprises 252 residues: Adenosylcobinamide-GDP ribazoletransferase (252 aa).

Transmembrane regions (helical) follow at residues L4–E24, P38–L58, I60–L80, F113–L133, I141–I161, L190–V210, and V232–T252.

The protein belongs to the CobS family. Requires Mg(2+) as cofactor.

It localises to the cell membrane. It catalyses the reaction alpha-ribazole + adenosylcob(III)inamide-GDP = adenosylcob(III)alamin + GMP + H(+). The catalysed reaction is alpha-ribazole 5'-phosphate + adenosylcob(III)inamide-GDP = adenosylcob(III)alamin 5'-phosphate + GMP + H(+). Its pathway is cofactor biosynthesis; adenosylcobalamin biosynthesis; adenosylcobalamin from cob(II)yrinate a,c-diamide: step 7/7. In terms of biological role, joins adenosylcobinamide-GDP and alpha-ribazole to generate adenosylcobalamin (Ado-cobalamin). Also synthesizes adenosylcobalamin 5'-phosphate from adenosylcobinamide-GDP and alpha-ribazole 5'-phosphate. The chain is Adenosylcobinamide-GDP ribazoletransferase from Clostridium botulinum (strain Alaska E43 / Type E3).